We begin with the raw amino-acid sequence, 156 residues long: MSRRHSAEKREVLPDPKFGNVVITKFMNSIMYAGKKSVAESIVYGALDLIEAKTKQGPLTVFEQALENVMPTIEVRSRRVGGATYQVPVEVRSTRRQALGIRWLITAARGRNEKTMTERLSAELLDASNNRGSAVKKREDVHKMAEANRAFSHYRW.

It belongs to the universal ribosomal protein uS7 family. In terms of assembly, part of the 30S ribosomal subunit. Contacts proteins S9 and S11.

In terms of biological role, one of the primary rRNA binding proteins, it binds directly to 16S rRNA where it nucleates assembly of the head domain of the 30S subunit. Is located at the subunit interface close to the decoding center, probably blocks exit of the E-site tRNA. The sequence is that of Small ribosomal subunit protein uS7 from Nitrobacter winogradskyi (strain ATCC 25391 / DSM 10237 / CIP 104748 / NCIMB 11846 / Nb-255).